A 657-amino-acid polypeptide reads, in one-letter code: MKEKSKNAAKTRREKENGEFYELAKLLPLPSAITSQLDKASIIRLTTSYLKMRAVFPEGLGDAWGQPSRTGPLDSVAKELGSHLLQTLDGFVFVVASDGKIMYISETASVHLGLSQVELTGNSIYEYIHPSDHDEMTAVLTAHPPLHHHLLQEYEIERSFFLRMKCVLAKRNAGLTCSGYKVIHCSGYLKIRQYMLDMSLYDSCYQIVGLVAVGQSLPPSAITEIKLHSNMFMFRASLDLKLIFLDSRVTELTGYEPQDLIEKTLYHHVHGCDTFHLRYAHHLLLVKGQVTTKYYRLLSKLGGWVWVQSYATVVHNSRSSRPHCIVSVNYVLTDVEYKELQLSLDQVSTSKSQESWRTTLSTSQETRKSAKPKNTKMKTKLRTNPYPPQQYSSFQMDKLECSQVGNWRTSPPTNAVAPPEQQLHSEASDLLYGPPYSLPFSYHYGHFPLDSHVFSSKKPGLPAKFGQPQGSPCEVARFFLSTLPASSECQWHCANSLVPSSSSPAKNLSEPSPVNAARHGLVPNYEAPSAAARRFCEDPAPPSFPSCGHYREEPALGPAKAPRQASRDAARLALARAPPECCAPPAPEPQAPAQLPFVLLNYHRVLARRGPLGSAAPGAPEAAGSLRPRHPGPVAASAPGAPRPHYLGASVIITNGR.

Residues 1 to 53 (MKEKSKNAAKTRREKENGEFYELAKLLPLPSAITSQLDKASIIRLTTSYLKMR) enclose the bHLH domain. PAS domains lie at 77 to 147 (AKEL…PPLH) and 218 to 288 (PPSA…LVKG). Positions 218–288 (PPSAITEIKL…YAHHLLLVKG (71 aa)) constitute a PAC domain. The Single-minded C-terminal domain maps to 336–657 (EYKELQLSLD…GASVIITNGR (322 aa)). The segment covering 354–364 (ESWRTTLSTSQ) has biased composition (polar residues). 2 disordered regions span residues 354-387 (ESWR…NPYP) and 612-641 (LGSA…APGA). The Nuclear localization signal motif lies at 367 to 386 (RKSAKPKNTKMKTKLRTNPY). Positions 369-381 (SAKPKNTKMKTKL) are enriched in basic residues.

As to quaternary structure, efficient DNA binding requires dimerization with another bHLH protein. Heterodimer of SIM2 and ARNT. As to expression, transcripts were detected in high levels in kidney followed by skeletal muscle and lung. Low levels were found in testis, brain and heart. In early fetal development it is found in CNS, developing kidney, tongue epithelium and cartilage primordia.

The protein localises to the nucleus. Transcription factor that may be a master gene of CNS development in cooperation with Arnt. It may have pleiotropic effects in the tissues expressed during development. This Mus musculus (Mouse) protein is Single-minded homolog 2 (Sim2).